The sequence spans 184 residues: Elongation factor P (184 aa).

Belongs to the elongation factor P family.

It localises to the cytoplasm. The protein operates within protein biosynthesis; polypeptide chain elongation. In terms of biological role, involved in peptide bond synthesis. Stimulates efficient translation and peptide-bond synthesis on native or reconstituted 70S ribosomes in vitro. Probably functions indirectly by altering the affinity of the ribosome for aminoacyl-tRNA, thus increasing their reactivity as acceptors for peptidyl transferase. The protein is Elongation factor P of Leptothrix cholodnii (strain ATCC 51168 / LMG 8142 / SP-6) (Leptothrix discophora (strain SP-6)).